Here is a 433-residue protein sequence, read N- to C-terminus: Homeobox protein Hox-D3 (433 aa).

Disordered regions lie at residues Ser44 to Val198, Gly258 to His280, and His401 to Leu433. Residues Ser58–Ala74 show a composition bias toward polar residues. Residues Asn97–Gln106 show a composition bias toward gly residues. Over residues Pro116–Pro132 the composition is skewed to pro residues. Residues Gly146–Lys159 show a composition bias toward low complexity. The short motif at Ile161–Lys166 is the Antp-type hexapeptide element. Polar residues predominate over residues Asn171–Glu183. Positions Ser195–Gln254 form a DNA-binding region, homeobox.

It belongs to the Antp homeobox family. As to expression, detected in adult kidney, but not in other adult tissues tested.

It is found in the nucleus. Functionally, sequence-specific transcription factor which is part of a developmental regulatory system that provides cells with specific positional identities on the anterior-posterior axis. The chain is Homeobox protein Hox-D3 (Hoxd3) from Mus musculus (Mouse).